The primary structure comprises 150 residues: Early 4 ORF6/7 control protein (150 aa).

The disordered stretch occupies residues 1–31 (MTTSGVPFGMTLRPTRSRLSRRTPYSRDRLP). A Nuclear localization signal motif is present at residues 1 to 58 (MTTSGVPFGMTLRPTRSRLSRRTPYSRDRLPPFETETRATILEDHPLLPECNTLTMHN).

Belongs to the adenoviridae E4-orf6/7 family. In terms of assembly, interacts with host E2F proteins.

The protein resides in the host nucleus. In terms of biological role, modulates viral and host transcriptional activity to promote viral genome replication. Stimulates viral E2a promoter activity by binding and inducing dimerization of host E2F. During viral infection E1A protein binds to cellular retinablastoma (RB) family members and dissociates these repressors from a complex with E2F proteins. Free E2F is then bound to E4orf6/7 which leads to transactivation of viral E2 promoter, and cellular promoters such as E2F-1 promoter. Activation of cellular E2F targets promote cell cycle S phase and thereby possibly favorises viral DNA replication process. In Human adenovirus C serotype 2 (HAdV-2), this protein is Early 4 ORF6/7 control protein.